The following is a 385-amino-acid chain: Tumor protein p53-inducible protein 13 (385 aa).

Positions 1–27 are cleaved as a signal peptide; the sequence is MVHPPPPPPRLLLVALVGLLSLREVVA. Over 28-301 the chain is Extracellular; the sequence is EPAEEAGTPC…ARGPTPRTEE (274 aa). The disordered stretch occupies residues 242 to 297; that stretch reads APVSLTTGGPGGNGRSRTEAQMPSGQGNHGGCACPGQVSPAPRAAGPPRVARGPTP. The span at 281–297 shows a compositional bias: low complexity; sequence PAPRAAGPPRVARGPTP. Residues 302 to 322 traverse the membrane as a helical segment; the sequence is AAWAAMALTFLLVLLTLATLC. Over 323-385 the chain is Cytoplasmic; it reads TRLHRNFRRS…DSGPDSESSD (63 aa). A compositionally biased stretch (basic residues) spans 359-369; sequence SRRIKRSRRRP. The interval 359-385 is disordered; the sequence is SRRIKRSRRRPLLPPTPDSGPDSESSD.

It localises to the cell membrane. The protein resides in the cytoplasm. May act as a tumor suppressor. Inhibits tumor cell growth, when overexpressed. In Mus musculus (Mouse), this protein is Tumor protein p53-inducible protein 13 (Tp53i13).